The chain runs to 291 residues: Ribosomal RNA small subunit methyltransferase A (291 aa).

The S-adenosyl-L-methionine site is built by Asn-28, Leu-30, Gly-55, Glu-77, Asp-103, and Asn-123.

The protein belongs to the class I-like SAM-binding methyltransferase superfamily. rRNA adenine N(6)-methyltransferase family. RsmA subfamily.

Its subcellular location is the cytoplasm. It carries out the reaction adenosine(1518)/adenosine(1519) in 16S rRNA + 4 S-adenosyl-L-methionine = N(6)-dimethyladenosine(1518)/N(6)-dimethyladenosine(1519) in 16S rRNA + 4 S-adenosyl-L-homocysteine + 4 H(+). Its function is as follows. Specifically dimethylates two adjacent adenosines (A1518 and A1519) in the loop of a conserved hairpin near the 3'-end of 16S rRNA in the 30S particle. May play a critical role in biogenesis of 30S subunits. The polypeptide is Ribosomal RNA small subunit methyltransferase A (Azorhizobium caulinodans (strain ATCC 43989 / DSM 5975 / JCM 20966 / LMG 6465 / NBRC 14845 / NCIMB 13405 / ORS 571)).